A 44-amino-acid chain; its full sequence is Mu-conotoxin-like Cal 12.1.1e (44 aa).

Intrachain disulfides connect Cys-3-Cys-16, Cys-11-Cys-28, Cys-18-Cys-33, and Cys-27-Cys-38. Residue Trp-17 is modified to 6'-bromotryptophan. Position 23 is a 4-hydroxyproline (Pro-23). 6'-bromotryptophan is present on residues Trp-36 and Trp-37. The residue at position 39 (Pro-39) is a 4-hydroxyproline. Trp-43 is modified (6'-bromotryptophan).

Expressed by the venom duct.

Its subcellular location is the secreted. Functionally, mu-conotoxins block voltage-gated sodium channels. This toxin reversibly blocks voltage-gated sodium channel in cephalopods, with no alteration in the voltage dependence of sodium conductance or on the kinetics of inactivation. This chain is Mu-conotoxin-like Cal 12.1.1e, found in Californiconus californicus (California cone).